A 522-amino-acid chain; its full sequence is Probable cytosolic Fe-S cluster assembly factor narfl (522 aa).

The [4Fe-4S] cluster site is built by Cys26, Cys73, Cys76, Cys79, Cys205, Cys281, Cys439, and Cys443.

It belongs to the NARF family.

Functionally, component of the cytosolic iron-sulfur (Fe/S) protein assembly machinery. Required for maturation of extramitochondrial Fe/S proteins. The chain is Probable cytosolic Fe-S cluster assembly factor narfl (narfl) from Dictyostelium discoideum (Social amoeba).